The chain runs to 111 residues: Type III endosome membrane protein TEMP (111 aa).

Over 1–27 (MIGGNTTIISGAINASTEAPGLGTGGR) the chain is Extracellular. Asn-5 carries N-linked (GlcNAc...) asparagine glycosylation. The helical; Signal-anchor for type III membrane protein transmembrane segment at 28 to 48 (AWPVLVGVVLGAVVLSILIAL) threads the bilayer. The Cytoplasmic portion of the chain corresponds to 49–111 (AAKCHLCRRY…TTGSRDHFSL (63 aa)). The interval 64 to 111 (HRPLSSAGGGNRPPVGEDEDDDGFIEDNYIQPGAGEMETTGSRDHFSL) is disordered. A compositionally biased stretch (acidic residues) spans 79 to 88 (GEDEDDDGFI).

In terms of tissue distribution, expressed in stomach, kidney, large and small intestine and kidney.

The protein resides in the membrane. It is found in the early endosome. It localises to the recycling endosome. Its subcellular location is the cell membrane. May be involved in membrane trafficking between endosomes and plasma membrane. The polypeptide is Type III endosome membrane protein TEMP (Mus musculus (Mouse)).